A 406-amino-acid chain; its full sequence is Tyrosine--tRNA ligase (406 aa).

Tyrosine 34 is a binding site for L-tyrosine. A 'HIGH' region motif is present at residues 39–48 (PTADSLHVGH). L-tyrosine-binding residues include tyrosine 167 and glutamine 171. The 'KMSKS' region signature appears at 227-231 (KMGKT). ATP is bound at residue lysine 230. The region spanning 339 to 404 (RKIVDVLFEA…GKKEYHRLLV (66 aa)) is the S4 RNA-binding domain.

This sequence belongs to the class-I aminoacyl-tRNA synthetase family. TyrS type 1 subfamily. As to quaternary structure, homodimer.

It is found in the cytoplasm. The enzyme catalyses tRNA(Tyr) + L-tyrosine + ATP = L-tyrosyl-tRNA(Tyr) + AMP + diphosphate + H(+). Catalyzes the attachment of tyrosine to tRNA(Tyr) in a two-step reaction: tyrosine is first activated by ATP to form Tyr-AMP and then transferred to the acceptor end of tRNA(Tyr). This Caldanaerobacter subterraneus subsp. tengcongensis (strain DSM 15242 / JCM 11007 / NBRC 100824 / MB4) (Thermoanaerobacter tengcongensis) protein is Tyrosine--tRNA ligase.